Here is an 86-residue protein sequence, read N- to C-terminus: Small ribosomal subunit protein bS20 (86 aa).

The span at Met-1–Val-11 shows a compositional bias: basic residues. The disordered stretch occupies residues Met-1–Arg-20.

It belongs to the bacterial ribosomal protein bS20 family.

In terms of biological role, binds directly to 16S ribosomal RNA. The protein is Small ribosomal subunit protein bS20 of Bifidobacterium animalis subsp. lactis (strain AD011).